A 282-amino-acid chain; its full sequence is Protease HtpX homolog (282 aa).

Transmembrane regions (helical) follow at residues 6–26 and 29–49; these read TLVLMVFLSVFFIFVGSLIGG and GATFALIMALGMNFFAYFFSH. H130 is a binding site for Zn(2+). E131 is an active-site residue. H134 contacts Zn(2+). The next 2 membrane-spanning stretches (helical) occupy residues 140 to 160 and 180 to 200; these read ILISTIAATIAGAISYLAQMA and IVALLMMIIAPLIAMIIQLAI. Zn(2+) is bound at residue E205.

This sequence belongs to the peptidase M48B family. Zn(2+) is required as a cofactor.

It is found in the cell inner membrane. The sequence is that of Protease HtpX homolog from Thermodesulfovibrio yellowstonii (strain ATCC 51303 / DSM 11347 / YP87).